Consider the following 61-residue polypeptide: U-poneritoxin(01)-Om5a (61 aa).

Residues 1-23 (MKLSALSLAFAIILMMTIMYTKA) form the signal peptide. The propeptide occupies 24–41 (DADASADAEADADAEAEA). Q59 is subject to Glutamine amide.

This sequence belongs to the formicidae venom precursor-01 superfamily. In terms of processing, truncated sequences of this peptide have also been found in the venom. It is possible they have been cleaved in the venom. As to expression, expressed by the venom gland.

It is found in the secreted. In terms of biological role, acidic peptide with potent hemolytic activities (94.8% at 50 uM). It also shows low antimicrobial activities against E.coli (MIC=50uM), as well as histamine-releasing activity (28.3% at 10 uM). Does not have activity against S.aureus, and S.cerevisiae. The chain is U-poneritoxin(01)-Om5a from Odontomachus monticola (Trap-jaw ant).